The primary structure comprises 288 residues: UAP56-interacting factor (288 aa).

The UAP56-binding motif motif lies at 11 to 29; it reads TIDKIDMSLDDIIKLNKQE. Positions 183–202 are disordered; it reads DLPELSKTPPWRTSVSSGGS.

The protein belongs to the UIF family.

Its subcellular location is the nucleus. It localises to the nucleoplasm. The protein resides in the nucleus speckle. Required for mRNA export from the nucleus to the cytoplasm. Acts as an adapter that uses the ddx39b/uap56-nfx1 pathway to ensure efficient mRNA export and delivering to the nuclear pore. This chain is UAP56-interacting factor (fyttd1), found in Xenopus laevis (African clawed frog).